Consider the following 179-residue polypeptide: ATP-dependent protease subunit HslV (179 aa).

Thr-8 is an active-site residue. Residues Ser-164, Cys-167, and Thr-170 each contribute to the Na(+) site.

This sequence belongs to the peptidase T1B family. HslV subfamily. As to quaternary structure, a double ring-shaped homohexamer of HslV is capped on each side by a ring-shaped HslU homohexamer. The assembly of the HslU/HslV complex is dependent on binding of ATP.

It is found in the cytoplasm. The enzyme catalyses ATP-dependent cleavage of peptide bonds with broad specificity.. Its activity is regulated as follows. Allosterically activated by HslU binding. Its function is as follows. Protease subunit of a proteasome-like degradation complex believed to be a general protein degrading machinery. The sequence is that of ATP-dependent protease subunit HslV from Staphylococcus carnosus (strain TM300).